The chain runs to 201 residues: Coiled-coil domain-containing protein 195 (201 aa).

Residues 4-38 (DIQLMRLIQEMRAEIHKLEKENQALRMKLTASSQR) adopt a coiled-coil conformation. Disordered stretches follow at residues 28–72 (LRMK…DAAP) and 179–201 (SKNSSSLKHSPNQATNQLSIIAE). Positions 179–188 (SKNSSSLKHS) are enriched in low complexity. Residues 189–201 (PNQATNQLSIIAE) are compositionally biased toward polar residues.

The sequence is that of Coiled-coil domain-containing protein 195 from Homo sapiens (Human).